A 330-amino-acid chain; its full sequence is Autoinducer 2 import system permease protein LsrD (330 aa).

Residues 1 to 4 (MRIR) are Cytoplasmic-facing. A helical transmembrane segment spans residues 5–25 (YGWELALAALLVIEIVSFGAI). Residues 26-42 (NPRMLDLNMLLFSTSDF) lie on the Periplasmic side of the membrane. Residues 43–63 (ICIGIVALPLTMVIVSGGIDI) traverse the membrane as a helical segment. Residues 64–67 (SFGS) are Cytoplasmic-facing. A run of 2 helical transmembrane segments spans residues 68 to 88 (TIGLCAIALGVLFQSGVPMPL) and 89 to 109 (AILLTLLLGALCGLINAGLII). The Cytoplasmic portion of the chain corresponds to 110–115 (YTKVNP). The helical transmembrane segment at 116-136 (LVITLGTLYLFAGSALLLSGM) threads the bilayer. Residues 137-159 (AGATGYEGIGGFPMAFTDFANLD) are Periplasmic-facing. The chain crosses the membrane as a helical span at residues 160–180 (VLGLPVPLIIFLICLLVFWLW). Residues 181–209 (LHKTHAGRNVFLIGQSPRVALYSAIPVNR) are Cytoplasmic-facing. Residues 210 to 230 (TLCALYAMTGLASAVAAVLLV) traverse the membrane as a helical segment. Topologically, residues 231–237 (SYFGSAR) are periplasmic. 2 helical membrane-spanning segments follow: residues 238-258 (SDLGASFLMPAITAVVLGGAN) and 259-279 (IYGGSGAIIGTAIAVLLVGYL). Residues 280–285 (QQGLQM) are Periplasmic-facing. Residues 286 to 306 (AGVPNQVSSALSGALLIVVVV) form a helical membrane-spanning segment. The Cytoplasmic segment spans residues 307–330 (GRSVSLHRQQIKEWLARRANNPLP).

This sequence belongs to the binding-protein-dependent transport system permease family. AraH/RbsC subfamily. In terms of assembly, the complex is composed of two ATP-binding proteins (LsrA), two transmembrane proteins (LsrC and LsrD) and a solute-binding protein (LsrB).

Its subcellular location is the cell inner membrane. Part of the ABC transporter complex LsrABCD involved in autoinducer 2 (AI-2) import. Probably responsible for the translocation of the substrate across the membrane. In Escherichia coli O157:H7, this protein is Autoinducer 2 import system permease protein LsrD (lsrD).